Here is a 41-residue protein sequence, read N- to C-terminus: uncharacterized protein (41 aa).

The segment at asparagine 19–leucine 41 is disordered.

This is an uncharacterized protein from Dictyostelium discoideum (Social amoeba).